Consider the following 252-residue polypeptide: Undecaprenyl-diphosphatase (252 aa).

7 consecutive transmembrane segments (helical) span residues 1-21, 42-62, 74-94, 95-115, 172-192, 206-226, and 232-252; these read MTTL…FLPI, HKAF…FLYF, ILIA…IIKS, LFNP…LILI, AAEF…FYDV, NLIV…KWLL, and HSFI…YLWY.

It belongs to the UppP family.

The protein resides in the cell inner membrane. It carries out the reaction di-trans,octa-cis-undecaprenyl diphosphate + H2O = di-trans,octa-cis-undecaprenyl phosphate + phosphate + H(+). Catalyzes the dephosphorylation of undecaprenyl diphosphate (UPP). Confers resistance to bacitracin. This is Undecaprenyl-diphosphatase from Sulfurihydrogenibium sp. (strain YO3AOP1).